Reading from the N-terminus, the 515-residue chain is UPF0053 protein BUsg_314 (515 aa).

7 helical membrane passes run 14-34, 49-69, 79-99, 125-145, 150-170, 185-205, and 207-227; these read LTLV…VAIL, IGLG…SWVV, NFFS…FLLF, FWAV…DAII, MVNQ…LMLL, VVVL…AEAL, and FYIP…IEIF. CBS domains follow at residues 309–368 and 372–432; these read MTPR…NIDV and ASQI…DADE.

This sequence belongs to the UPF0053 family.

The protein resides in the cell membrane. The protein is UPF0053 protein BUsg_314 of Buchnera aphidicola subsp. Schizaphis graminum (strain Sg).